Consider the following 310-residue polypeptide: Ribosomal protein L11 methyltransferase (310 aa).

Residues Thr-156, Gly-179, Asp-201, and Asn-246 each contribute to the S-adenosyl-L-methionine site.

Belongs to the methyltransferase superfamily. PrmA family.

Its subcellular location is the cytoplasm. The catalysed reaction is L-lysyl-[protein] + 3 S-adenosyl-L-methionine = N(6),N(6),N(6)-trimethyl-L-lysyl-[protein] + 3 S-adenosyl-L-homocysteine + 3 H(+). Functionally, methylates ribosomal protein L11. This chain is Ribosomal protein L11 methyltransferase, found in Desulfatibacillum aliphaticivorans.